The following is a 708-amino-acid chain: Wall-associated receptor kinase-like 14 (708 aa).

The signal sequence occupies residues 1 to 42 (MLRSIFDFNQRSTKMVMISHKLDLILVFIIVIGGSIFRRVSA). N-linked (GlcNAc...) asparagine glycans are attached at residues Asn43, Asn88, Asn101, Asn131, Asn158, Asn167, and Asn184. The Extracellular segment spans residues 43–285 (NFTVPCNGRC…WRHCRSNLIT (243 aa)). Residues 286–306 (IVGGTVGGAFLLAALAFFFFC) form a helical membrane-spanning segment. The Cytoplasmic segment spans residues 307-708 (KRRRSTPLRS…TNTLLGNIPR (402 aa)). In terms of domain architecture, Protein kinase spans 348-629 (FSEKQKLGIG…LEQIRLSGWI (282 aa)). ATP contacts are provided by residues 354–362 (LGIGAYGTV) and Lys376. Residue Asp472 is the Proton acceptor of the active site. Disordered stretches follow at residues 636–659 (SPAGSLRSSDRGSERSVKQSSIGS) and 686–708 (VQDPWLSAQSSPSTNTLLGNIPR). Residues 643–652 (SSDRGSERSV) are compositionally biased toward basic and acidic residues. Positions 692 to 708 (SAQSSPSTNTLLGNIPR) are enriched in polar residues.

Belongs to the protein kinase superfamily. Ser/Thr protein kinase family.

It is found in the membrane. The catalysed reaction is L-seryl-[protein] + ATP = O-phospho-L-seryl-[protein] + ADP + H(+). It catalyses the reaction L-threonyl-[protein] + ATP = O-phospho-L-threonyl-[protein] + ADP + H(+). Functionally, serine/threonine-protein kinase that may function as a signaling receptor of extracellular matrix component. The polypeptide is Wall-associated receptor kinase-like 14 (WAKL14) (Arabidopsis thaliana (Mouse-ear cress)).